Reading from the N-terminus, the 161-residue chain is Lipid droplet assembly factor 1 (161 aa).

The Cytoplasmic segment spans residues 1–43; the sequence is MAEEEPSSVSRDLQELQRKLGLLLESFQNNSKVVAFMKSPVGR. A helical transmembrane segment spans residues 44–61; sequence FLDRHPFLVLTVLMFVTM. Over 62–67 the chain is Lumenal; sequence SAIPVG. A helical membrane pass occupies residues 68–87; it reads FFLLIVVLTSLGALMGAILL. Residues 88-93 are Cytoplasmic-facing; sequence EGLVIS. Residues 94–110 form a helical membrane-spanning segment; that stretch reads VCGLSLLCILCGLGFVS. At 111–116 the chain is on the lumenal side; sequence LALSGI. Residues 117-133 traverse the membrane as a helical segment; the sequence is TMMSYVVVSCLMSYWFS. Topologically, residues 134–161 are cytoplasmic; that stretch reads PSRPPTQQHANIDSQLAMKFTESEKLGL.

The protein belongs to the LDAF1 family. As to quaternary structure, interacts with BSCL2/seipin to form an oligomeric complex.

The protein localises to the endoplasmic reticulum membrane. Its subcellular location is the lipid droplet. Its function is as follows. Plays an important role in the formation of lipid droplets (LD) which are storage organelles at the center of lipid and energy homeostasis. In association with BSCL2/seipin, defines the sites of LD formation in the endoplasmic reticulum. This is Lipid droplet assembly factor 1 from Rattus norvegicus (Rat).